A 748-amino-acid chain; its full sequence is WD repeat-containing protein 91 (748 aa).

Residues Gln183–Leu228 are a coiled coil. Residue Ser257 is modified to Phosphoserine. A compositionally biased stretch (low complexity) spans Leu266–Pro279. The segment at Leu266 to Pro368 is disordered. Positions Pro284–Thr300 are enriched in polar residues. Phosphoserine is present on residues Ser289 and Ser294. The segment covering Arg333–Leu344 has biased composition (basic and acidic residues). Over residues Leu345–Cys354 the composition is skewed to polar residues. WD repeat units follow at residues Glu407–Ala446, Ile449–Glu489, Val512–Gln556, Pro561–Ser600, Ala603–Ser642, Val665–Glu703, and Gly710–Leu748.

Belongs to the WD repeat WDR91 family. Interacts with WDR81; involved in early to late endosome cargo transport. Interacts with BECN1; negatively regulates the PI3 kinase/PI3K activity associated with endosomal membranes.

The protein localises to the early endosome membrane. The protein resides in the late endosome membrane. Its function is as follows. Functions as a negative regulator of the PI3 kinase/PI3K activity associated with endosomal membranes via BECN1, a core subunit of the PI3K complex. By modifying the phosphatidylinositol 3-phosphate/PtdInsP3 content of endosomal membranes may regulate endosome fusion, recycling, sorting and early to late endosome transport. It is for instance, required for the delivery of cargos like BST2/tetherin from early to late endosome and thereby participates indirectly to their degradation by the lysosome. May play a role in meiosis. This chain is WD repeat-containing protein 91, found in Mus musculus (Mouse).